We begin with the raw amino-acid sequence, 338 residues long: Galactinol synthase 2 (338 aa).

Lysine 105 is an active-site residue. 3 residues coordinate Mn(2+): aspartate 121, aspartate 123, and histidine 258.

It belongs to the glycosyltransferase 8 family. Galactosyltransferase subfamily. A divalent metal cation is required as a cofactor.

It is found in the cytoplasm. It carries out the reaction myo-inositol + UDP-alpha-D-galactose = alpha-D-galactosyl-(1-&gt;3)-1D-myo-inositol + UDP + H(+). Its function is as follows. Galactinol synthase involved in the biosynthesis of raffinose family oligosaccharides (RFOs) that function as osmoprotectants. May promote plant stress tolerance. The chain is Galactinol synthase 2 (GOLS2) from Solanum lycopersicum (Tomato).